A 130-amino-acid chain; its full sequence is Small ribosomal subunit protein uS11c (130 aa).

The protein belongs to the universal ribosomal protein uS11 family. Part of the 30S ribosomal subunit.

The protein localises to the plastid. It localises to the chloroplast. This Spirogyra maxima (Green alga) protein is Small ribosomal subunit protein uS11c.